Consider the following 690-residue polypeptide: MPRVHAIEDYRNFGIMAHIDAGKTTTTERILYYTGKSHKIGEVHEGAATMDWMEQEQERGITITSAATTAFWNGKRLNIIDTPGHVDFTIEVERSLRVLDGAVVVLDGNQGVEPQTETVWRQGDKYRVPRIVFANKMDKTGADFYKCLQDIIDRLGAKPIAIQLPIGEESNFKGLVDLVRMKGVIWEDEALGANFKDIDIPADLVEKAKEYREKLVEAAVELDDEVLTAFLDGVEPDEATLKRLIRKAVLTSAFYPVLCGSAFKNKGVQPLLDAVVDYLPSPVDVPAIKGVDDDGNEIIRLPNDSEPLALLAFKIMDDPFVGTITFCRIYSGTLISGTGVVNSTRDRKERIGRMLLMHANNREDIKEAYAGDIVALAGLKEARTGDTLCDANKPVILEKMEFPEPVIEIAIEPKTKADQEKLGVALAKLAAEDPSFRVSTDLESGQTILKGMGELHLDIKVDILRRTYKVDANIGAPQVAFRERVTKKAEVDYTHKKQTGGTGQFARVKFIVEPNEPGKGFEFESKVVGGAVPKEYIPGVEKGLNSVLSSGVVAGFPVVDVKVTLIDGAYHDVDSSALAFEIASRAAFREALQKGKSVLLEPIMKVECVTPEDYTGSVIGDLNSRRGQIQGQDMRGNANVINAMVPLMNMFGYVNNLRSMSQGRATFTMQFDHYAEAPANVSAEVQKKFA.

The 276-residue stretch at 8 to 283 (EDYRNFGIMA…AVVDYLPSPV (276 aa)) folds into the tr-type G domain. GTP contacts are provided by residues 17-24 (AHIDAGKT), 81-85 (DTPGH), and 135-138 (NKMD).

This sequence belongs to the TRAFAC class translation factor GTPase superfamily. Classic translation factor GTPase family. EF-G/EF-2 subfamily.

The protein localises to the cytoplasm. Functionally, catalyzes the GTP-dependent ribosomal translocation step during translation elongation. During this step, the ribosome changes from the pre-translocational (PRE) to the post-translocational (POST) state as the newly formed A-site-bound peptidyl-tRNA and P-site-bound deacylated tRNA move to the P and E sites, respectively. Catalyzes the coordinated movement of the two tRNA molecules, the mRNA and conformational changes in the ribosome. In Rhodopseudomonas palustris (strain BisB18), this protein is Elongation factor G.